The chain runs to 374 residues: Putative heme chaperone HemW-like protein (374 aa).

Residues 1-231 (MKLLGLYINI…EKLLKKSGYK (231 aa)) form the Radical SAM core domain.

This sequence belongs to the anaerobic coproporphyrinogen-III oxidase family. HemW subfamily.

The protein localises to the cytoplasm. Might be a heme chaperone; in E.coli heme binds independently of binding to [4Fe-4S] or S-adenosyl-L-methionine. This is Putative heme chaperone HemW-like protein from Buchnera aphidicola subsp. Baizongia pistaciae (strain Bp).